The following is a 1367-amino-acid chain: Paired amphipathic helix protein Sin3-like 2 (1367 aa).

The interval 14-44 (QFKRPLGSSRGESYEQSPITGGGSIGEGGIN) is disordered. Gly residues predominate over residues 33–42 (TGGGSIGEGG). PAH domains follow at residues 46–116 (QKLT…LPKG) and 130–200 (KTVE…LPDS). The tract at residues 212 to 322 (SQAQRYDDRG…EAYSGPASHS (111 aa)) is disordered. Composition is skewed to basic and acidic residues over residues 230–286 (MFME…SRDL) and 299–311 (FSEK…RMEG). The region spanning 327–396 (LKSMYNQAFL…DEFNQFFERC (70 aa)) is the PAH 3 domain. 4 disordered regions span residues 417–446 (EENL…KERS), 786–883 (DVHA…LSKP), 912–946 (QSDT…DSED), and 958–1031 (ATAK…EGME). Basic and acidic residues-rich tracts occupy residues 424–446 (VKGE…KERS) and 806–819 (SSGK…DLAN). Polar residues-rich tracts occupy residues 851–876 (ATSS…SSGS) and 912–923 (QSDTSKANSNYD). A compositionally biased stretch (basic and acidic residues) spans 958-967 (ATAKTEHSVE). Composition is skewed to acidic residues over residues 968–989 (AEGE…EAGE) and 997–1016 (IGDE…EHDE). Residue Ser1023 is modified to Phosphoserine.

It is found in the nucleus. Acts as a transcriptional repressor. Plays roles in regulating gene expression and genome stability. This is Paired amphipathic helix protein Sin3-like 2 (SNL2) from Arabidopsis thaliana (Mouse-ear cress).